Consider the following 211-residue polypeptide: N-(5'-phosphoribosyl)anthranilate isomerase (211 aa).

It belongs to the TrpF family.

The catalysed reaction is N-(5-phospho-beta-D-ribosyl)anthranilate = 1-(2-carboxyphenylamino)-1-deoxy-D-ribulose 5-phosphate. Its pathway is amino-acid biosynthesis; L-tryptophan biosynthesis; L-tryptophan from chorismate: step 3/5. The sequence is that of N-(5'-phosphoribosyl)anthranilate isomerase from Zymomonas mobilis subsp. mobilis (strain ATCC 31821 / ZM4 / CP4).